A 452-amino-acid chain; its full sequence is Bis(5'-adenosyl)-triphosphatase ENPP4 (452 aa).

Positions 1-15 (MKLLVILLFSGLITG) are cleaved as a signal peptide. The Extracellular segment spans residues 16–406 (FRSDSSSSLP…DQWCINLPEA (391 aa)). Positions 34 and 70 each coordinate Zn(2+). Thr-70 (AMP-threonine intermediate) is an active-site residue. Substrate contacts are provided by Asn-91 and Tyr-154. Residues Asn-155 and Asn-166 are each glycosylated (N-linked (GlcNAc...) asparagine). The Zn(2+) site is built by Asp-189, His-193, Asp-237, and His-238. Asp-189 contacts substrate. A disulfide bridge connects residues Cys-254 and Cys-287. An N-linked (GlcNAc...) asparagine glycan is attached at Asn-276. His-335 provides a ligand contact to Zn(2+). A disulfide bridge connects residues Cys-393 and Cys-400. A helical transmembrane segment spans residues 407–427 (IAIVIGSLLVLTMLTCLIIIM). Residues 428–452 (QNRLSVPRPFSRLQLQEDDDDPLIG) lie on the Cytoplasmic side of the membrane.

This sequence belongs to the nucleotide pyrophosphatase/phosphodiesterase family. Zn(2+) is required as a cofactor.

It is found in the cell membrane. It carries out the reaction P(1),P(3)-bis(5'-adenosyl) triphosphate + H2O = AMP + ADP + 2 H(+). Functionally, hydrolyzes extracellular Ap3A into AMP and ADP, and Ap4A into AMP and ATP. Ap3A and Ap4A are diadenosine polyphosphates thought to induce proliferation of vascular smooth muscle cells. Acts as a procoagulant, mediating platelet aggregation at the site of nascent thrombus via release of ADP from Ap3A and activation of ADP receptors. This chain is Bis(5'-adenosyl)-triphosphatase ENPP4 (ENPP4), found in Pongo abelii (Sumatran orangutan).